The sequence spans 279 residues: Shikimate dehydrogenase (NADP(+)) (279 aa).

Residues 21–23 and threonine 68 each bind shikimate; that span reads SMS. Lysine 72 serves as the catalytic Proton acceptor. The shikimate site is built by asparagine 93 and aspartate 108. Residues 130 to 134 and leucine 219 contribute to the NADP(+) site; that span reads GAGGA. Tyrosine 221 is a shikimate binding site. Glycine 242 is an NADP(+) binding site.

Belongs to the shikimate dehydrogenase family. Homodimer.

The catalysed reaction is shikimate + NADP(+) = 3-dehydroshikimate + NADPH + H(+). It functions in the pathway metabolic intermediate biosynthesis; chorismate biosynthesis; chorismate from D-erythrose 4-phosphate and phosphoenolpyruvate: step 4/7. Involved in the biosynthesis of the chorismate, which leads to the biosynthesis of aromatic amino acids. Catalyzes the reversible NADPH linked reduction of 3-dehydroshikimate (DHSA) to yield shikimate (SA). The protein is Shikimate dehydrogenase (NADP(+)) of Oleidesulfovibrio alaskensis (strain ATCC BAA-1058 / DSM 17464 / G20) (Desulfovibrio alaskensis).